A 342-amino-acid polypeptide reads, in one-letter code: Holliday junction branch migration complex subunit RuvB (342 aa).

Residues 1–179 (MTNILSPEKS…FGIPMRLNFY (179 aa)) form a large ATPase domain (RuvB-L) region. ATP-binding positions include Ile-18, Arg-19, Gly-60, Lys-63, Thr-64, Thr-65, 126–128 (EDF), Arg-169, Tyr-179, and Arg-216. Residue Thr-64 coordinates Mg(2+). Residues 180-250 (NTEELKKVLN…ISDFGLNRLE (71 aa)) are small ATPAse domain (RuvB-S). Residues 253-342 (CIGLDSNDYR…HQFNIFNENE (90 aa)) are head domain (RuvB-H). DNA-binding residues include Arg-289, Arg-308, and Arg-313.

It belongs to the RuvB family. As to quaternary structure, homohexamer. Forms an RuvA(8)-RuvB(12)-Holliday junction (HJ) complex. HJ DNA is sandwiched between 2 RuvA tetramers; dsDNA enters through RuvA and exits via RuvB. An RuvB hexamer assembles on each DNA strand where it exits the tetramer. Each RuvB hexamer is contacted by two RuvA subunits (via domain III) on 2 adjacent RuvB subunits; this complex drives branch migration. In the full resolvosome a probable DNA-RuvA(4)-RuvB(12)-RuvC(2) complex forms which resolves the HJ.

Its subcellular location is the cytoplasm. It catalyses the reaction ATP + H2O = ADP + phosphate + H(+). Functionally, the RuvA-RuvB-RuvC complex processes Holliday junction (HJ) DNA during genetic recombination and DNA repair, while the RuvA-RuvB complex plays an important role in the rescue of blocked DNA replication forks via replication fork reversal (RFR). RuvA specifically binds to HJ cruciform DNA, conferring on it an open structure. The RuvB hexamer acts as an ATP-dependent pump, pulling dsDNA into and through the RuvAB complex. RuvB forms 2 homohexamers on either side of HJ DNA bound by 1 or 2 RuvA tetramers; 4 subunits per hexamer contact DNA at a time. Coordinated motions by a converter formed by DNA-disengaged RuvB subunits stimulates ATP hydrolysis and nucleotide exchange. Immobilization of the converter enables RuvB to convert the ATP-contained energy into a lever motion, pulling 2 nucleotides of DNA out of the RuvA tetramer per ATP hydrolyzed, thus driving DNA branch migration. The RuvB motors rotate together with the DNA substrate, which together with the progressing nucleotide cycle form the mechanistic basis for DNA recombination by continuous HJ branch migration. Branch migration allows RuvC to scan DNA until it finds its consensus sequence, where it cleaves and resolves cruciform DNA. The polypeptide is Holliday junction branch migration complex subunit RuvB (Rickettsia africae (strain ESF-5)).